A 213-amino-acid polypeptide reads, in one-letter code: Ribosomal RNA small subunit methyltransferase G (213 aa).

Residues Gly-81, Leu-86, 132 to 133, and Arg-147 each bind S-adenosyl-L-methionine; that span reads VE.

This sequence belongs to the methyltransferase superfamily. RNA methyltransferase RsmG family.

The protein localises to the cytoplasm. It catalyses the reaction guanosine(527) in 16S rRNA + S-adenosyl-L-methionine = N(7)-methylguanosine(527) in 16S rRNA + S-adenosyl-L-homocysteine. In terms of biological role, specifically methylates the N7 position of guanine in position 527 of 16S rRNA. The polypeptide is Ribosomal RNA small subunit methyltransferase G (Mannheimia succiniciproducens (strain KCTC 0769BP / MBEL55E)).